Reading from the N-terminus, the 138-residue chain is Translation initiation factor 5A (138 aa).

Position 37 is a hypusine (K37).

This sequence belongs to the eIF-5A family.

The protein resides in the cytoplasm. Functionally, functions by promoting the formation of the first peptide bond. The protein is Translation initiation factor 5A (eIF5A) of Thermococcus sibiricus (strain DSM 12597 / MM 739).